A 374-amino-acid chain; its full sequence is Putative F-box/kelch-repeat protein At4g39756 (374 aa).

Positions 17–63 constitute an F-box domain; it reads CPSFLSLPEEILVNCLARIPKSYYPKLSLVCKSFCSLILSMELYVER. 4 Kelch repeats span residues 135-180, 181-227, 231-278, and 280-308; these read ELYA…VING, KIYV…GMAV, KIYV…RQSC, and WYDTKHKEWRDIKGLATLNRRRRSSILEV.

In Arabidopsis thaliana (Mouse-ear cress), this protein is Putative F-box/kelch-repeat protein At4g39756.